Here is a 124-residue protein sequence, read N- to C-terminus: Small ribosomal subunit protein uS12 (124 aa).

D89 is modified (3-methylthioaspartic acid). Residues 105–124 (SGVSDRRQGRSKYGAKRPKS) form a disordered region. The span at 113–124 (GRSKYGAKRPKS) shows a compositional bias: basic residues.

Belongs to the universal ribosomal protein uS12 family. As to quaternary structure, part of the 30S ribosomal subunit. Contacts proteins S8 and S17. May interact with IF1 in the 30S initiation complex.

In terms of biological role, with S4 and S5 plays an important role in translational accuracy. Functionally, interacts with and stabilizes bases of the 16S rRNA that are involved in tRNA selection in the A site and with the mRNA backbone. Located at the interface of the 30S and 50S subunits, it traverses the body of the 30S subunit contacting proteins on the other side and probably holding the rRNA structure together. The combined cluster of proteins S8, S12 and S17 appears to hold together the shoulder and platform of the 30S subunit. This chain is Small ribosomal subunit protein uS12, found in Colwellia psychrerythraea (strain 34H / ATCC BAA-681) (Vibrio psychroerythus).